We begin with the raw amino-acid sequence, 371 residues long: Probable dual-specificity RNA methyltransferase RlmN (371 aa).

Catalysis depends on glutamate 114, which acts as the Proton acceptor. The Radical SAM core domain occupies 120-346 (DGPRRSICVS…ESAGVNVNFR (227 aa)). A disulfide bridge links cysteine 127 with cysteine 357. [4Fe-4S] cluster-binding residues include cysteine 134, cysteine 138, and cysteine 141. Residues 183 to 184 (GE), serine 215, 238 to 240 (SLH), and asparagine 314 each bind S-adenosyl-L-methionine. Cysteine 357 acts as the S-methylcysteine intermediate in catalysis.

It belongs to the radical SAM superfamily. RlmN family. It depends on [4Fe-4S] cluster as a cofactor.

It localises to the cytoplasm. The enzyme catalyses adenosine(2503) in 23S rRNA + 2 reduced [2Fe-2S]-[ferredoxin] + 2 S-adenosyl-L-methionine = 2-methyladenosine(2503) in 23S rRNA + 5'-deoxyadenosine + L-methionine + 2 oxidized [2Fe-2S]-[ferredoxin] + S-adenosyl-L-homocysteine. It carries out the reaction adenosine(37) in tRNA + 2 reduced [2Fe-2S]-[ferredoxin] + 2 S-adenosyl-L-methionine = 2-methyladenosine(37) in tRNA + 5'-deoxyadenosine + L-methionine + 2 oxidized [2Fe-2S]-[ferredoxin] + S-adenosyl-L-homocysteine. Functionally, specifically methylates position 2 of adenine 2503 in 23S rRNA and position 2 of adenine 37 in tRNAs. The protein is Probable dual-specificity RNA methyltransferase RlmN of Rhodopirellula baltica (strain DSM 10527 / NCIMB 13988 / SH1).